A 39-amino-acid chain; its full sequence is Potassium channel toxin alpha-KTx 2.2 (39 aa).

3 cysteine pairs are disulfide-bonded: Cys7-Cys29, Cys13-Cys34, and Cys17-Cys36. Residues 37–39 (YPH) form an interaction with Kv1.3 channels region.

This sequence belongs to the short scorpion toxin superfamily. Potassium channel inhibitor family. Alpha-KTx 02 subfamily. Expressed by the venom gland.

The protein resides in the secreted. Potent inhibitor of voltage-gated potassium channels such as Kv1.1/KCNA1 (IC(50)=0.144 nM), Kv1.2/KCNA2 (IC(50)=0.675 nM), Kv1.3/KCNA3 (IC(50)=0.23 nM) and Shaker (Kd=160 nM). Suppresses expression of the Kv1.3/KCNA3 channel in lipopolysaccharide (LPS)-stimulated mouse macrophages. Down-regulates secretion of nitric oxide (NO) and inflammatory cytokines, such as TNF-alpha/TNF, IL-1beta/IL1B and IL6, in LPS-stimulated mouse macrophages in a manner dependent on Kv1.3/KCNA3 channel blockage. Reduces activation of MAPK and NF-kappa-B signaling pathways in LPS-stimulated mouse macrophages. Modulates intracellular Ca(2+) signaling in human PMA/ionomycin-triggered T-cells. Interferes with the activation of the MAPK, NF-kappa-B and NFATc1 pathways in human PMA/ionomycin-triggered T-cells. Reduces proliferation of human PMA/ionomycin-triggered T-cells. Down-regulates secretion of cytokines, such as TNF-alpha/TNF and IL2, in human PMA/ionomycin-triggered T-cells. This is Potassium channel toxin alpha-KTx 2.2 from Centruroides margaritatus (Central American bark Scorpion).